The primary structure comprises 801 residues: U-box domain-containing protein 44 (801 aa).

The U-box domain occupies 22-101 (HIYEAFICPL…EEWRSRNDAA (80 aa)). 9 ARM repeats span residues 134-173 (RSNRHGVRNSQLIHMIIDMLKSTSHRVRYKALQTLQVVVE), 176-215 (DESKAIVAEGDTVRTLVKFLSHEPSKGREAAVSLLFELSK), 218-259 (ALCE…NMER), 261-300 (EEIVRQMASYGRLQPLLGKLLEGSPETKLSMASFLGELPL), 301-340 (NNDVKVLVAQTVGSSLVDLMRSGDMPQREAALKALNKISS), 342-386 (EGSA…NIVN), 390-429 (DFDKATLVSENRVENLLHLISNTGPAIQCKLLEVLVGLTS), 435-475 (PKVV…NLSP), and 480-521 (ELAK…ELPD).

Interacts with AAO3. Binds to SD129. In terms of tissue distribution, expressed in leaves, root vasculature and guard cells.

It carries out the reaction S-ubiquitinyl-[E2 ubiquitin-conjugating enzyme]-L-cysteine + [acceptor protein]-L-lysine = [E2 ubiquitin-conjugating enzyme]-L-cysteine + N(6)-ubiquitinyl-[acceptor protein]-L-lysine.. It participates in protein modification; protein ubiquitination. Functions as an E3 ubiquitin-protein ligase. Prevents premature senescence probably by targeting proteins involved in this process for degradation. Promotes the degradation of AAO3 and thus represses abscisic acid (ABA) biosynthesis. This chain is U-box domain-containing protein 44 (PUB44), found in Arabidopsis thaliana (Mouse-ear cress).